The sequence spans 2505 residues: MEEVVIAGMSGKLPESENLQEFWANLIGGVDMVTDDDRRWKAGLYGLPKRSGKLKDLSKFDASFFGVHPKQAHTMDPQLRLLLEVSYEAIVDGGINPASLRGTNTGVWVGVSGSEASEALSRDPETLLGYSMVGCQRAMMANRLSFFFDFKGPSIALDTACSSSLLALQNAYQAIRSGECPAAIVGGINLLLKPNTSVQFMKLGMLSPDGTCRSFDDSGNGYCRAEAVVAVLLTKKSLARRVYATILNAGTNTDGCKEQGVTFPSGEAQEQLIRSLYQPGGVAPESLEYIEAHGTGTKVGDPQELNGITRSLCAFRQSPLLIGSTKSNMGHPEPASGLAALTKVLLSLENGVWAPNLHFHNPNPEIPALLDGRLQVVDRPLPVRGGIVGINSFGFGGANVHVILQPNTQQAPAPAPHAALPHLLHASGRTMEAVQGLLEQGRQHSQDLAFVSMLNDIAATPTAAMPFRGYTVLGVEGHVQEVQQVPASQRPLWFICSGMGTQWRGMGLSLMRLDSFRESILRSDEALKPLGVKVSDLLLSTDEHTFDDIVHSFVSLTAIQIALIDLLTSMGLKPDGIIGHSLGEVACGYADGCLSQREAVLAAYWRGQCIKDANLPAGSMAAVGLSWEECKQRCPPGVVPACHNSEDTVTISGPQAAVNEFVEQLKQEGVFAKEVRTGGLAFHSYFMEGIAPTLLQALKKVIREPRPRSARWLSTSIPEAQWQSSLARTSSAEYNVNNLVSPVLFQEALWHVPEHAVVLEIAPHALLQAVLKRGVKPSCTIIPLMKRDHKDNLEFFLTNLGKVHLTGIDINPNALFPPVEFPVPRGTPLISPHIKWDHSQTWDIPVAEDFPNGSSSSSATVYNIDASSESSDHYLVDHCIDGRVLFPGTGYLYLVWKTLARSLSLSLEETPVVFENVTFHQATILPRTGTVPLEVRLLEASHAFEVSDSGNLIVSGKVYQWEDPDSKLFDHPEVPIPAESESVSRLTQGEVYKELRLRGYDYGPHFQGVYEATLEGEQGKLLWKDNWVTFMDTMLQISILGFSKQSLQLPTRVTAIYIDPATHLQKVYMLEGDTQVADVTTSRCLGVTVSGGVYISRLQTTATSRRQQEQLVPTLEKFVFTPHVEPECLSESAILQKELQLCKGLAKALQTKATQQGLKMTVPGLEDLPQHGLPRLLAAACQLQLNGNLQLELGEVLARERLLLPEDPLISGLLNSQALKACIDTALENLSTLKMKVVEVLAGEGHLYSHISALLNTQPMLQLEYTATDRHPQALKDVQTKLQQHDVAQGQWDPSGPAPTNLGALDLVVCNCALATLGDPALALDNMVAALKDGGFLLMHTVLKGHALGETLACLPSEVQPGPSFLSQEEWESLFSRKALHLVGLKKSFYGTALFLCRRLSPQDKPIFLPVEDTSFQWVDSLKSILATSSSQPVWLTAMNCPTSGVVGLVNCLRKEPGGHRIRCILLSNLSSTSHVPKLDPGSSELQKVLESDLVMNVYRDGAWGAFRHFQLEQDKPEEQTAHAFVNVLTRGDLASIRWVSSPLKHMQPPSSSGAQLCTVYYASLNFRDIMLATGKLSPDAIPGKWASRDCMLGMEFSGRDKCGRRVMGLVPAEGLATSVLLSPDFLWDVPSSWTLEEAASVPVVYTTAYYSLVVRGRIQHGETVLIHSGSGGVGQAAISIALSLGCRVFTTVGSAEKRAYLQARFPQLDDTSFANSRDTSFEQHVLLHTGGKGVDLVLNSLAEEKLQASVRCLAQHGRFLEIGKFDLSNNHPLGMAIFLKNVTFHGILLDALFEGANDSWREVAELLKAGIRDGVVKPLKCTVFPKAQVEDAFRYMAQGKHIGKVLVQVREEEPEAMLPGAQPTLISAISKTFCPEHKSYIITGGLGGFGLELARWLVLRGAQRLVLTSRSGIRTGYQAKHVREWRRQGIHVLVSTSNVSSLEGARALIAEATKLGPVGGVFNLAMVLRDAMLENQTPELFQDVNKPKYNGTLNLDRATREACPELDYFVAFSSVSCGRGNAGQSNYGFANSTMERICEQRRHDGLPGLAVQWGAIGDVGIILEAMGTNDTVVGGTLPQRISSCMEVLDLFLNQPHAVLSSFVLAEKKAVAHGDGEAQRDLVKAVAHILGIRDLAGINLDSSLADLGLDSLMGVEVRQILEREHDLVLPIREVRQLTLRKLQEMSSKAGSDTELAAPKSKNDTSLKQAQLNLSILLVNPEGPTLTRLNSVQSSERPLFLVHPIEGSITVFHSLAAKLSVPTYGLQCTQAAPLDSIPNLAAYYIDCIKQVQPEGPYRVAGYSFGACVAFEMCSQLQAQQGPAPAHNNLFLFDGSHTYVLAYTQSYRAKLTPGCEAEAEAEAICFFIKQFVDAEHSKVLEALLPLKSLEDRVAAAVDLITRSHQSLDRRDLSFAAVSFYYKLRAADQYKPKAKYHGNVILLRAKTGGTYGEDLGADYNLSQVCDGKVSVHIIEGDHRTLLEGRGLESIINIIHSSLAEPRVSVREG.

Residue Met-1 is modified to N-acetylmethionine. The region spanning 1–406 is the Ketosynthase family 3 (KS3) domain; sequence MEEVVIAGMS…GANVHVILQP (406 aa). The residue at position 59 (Lys-59) is an N6-acetyllysine. Position 63 is a phosphoserine (Ser-63). An N6-acetyllysine modification is found at Lys-70. Residue Cys-161 is the For beta-ketoacyl synthase activity of the active site. Ser-207 carries the post-translational modification Phosphoserine. The active-site For beta-ketoacyl synthase activity is His-293. Position 298 is an N6-acetyllysine (Lys-298). The For beta-ketoacyl synthase activity role is filled by His-331. An acyl and malonyl transferases region spans residues 429–817; that stretch reads RTMEAVQGLL…IDINPNALFP (389 aa). An N6-acetyllysine modification is found at Lys-528. Ser-581 (for malonyltransferase activity) is an active-site residue. An acyl-CoA-binding positions include 647 to 648 and Phe-671; that span reads DT. Lys-673 is subject to N6-acetyllysine. Ser-725 carries the phosphoserine modification. Arg-773 contributes to the an acyl-CoA binding site. Lys-790 bears the N6-acetyllysine mark. The segment at 844 to 966 is N-terminal hotdog fold; that stretch reads IPVAEDFPNG…KVYQWEDPDS (123 aa). One can recognise a PKS/mFAS DH domain in the interval 844–1112; that stretch reads IPVAEDFPNG…TSRRQQEQLV (269 aa). His-878 acts as the Proton acceptor; for dehydratase activity in catalysis. The C-terminal hotdog fold stretch occupies residues 983–1112; that stretch reads VSRLTQGEVY…TSRRQQEQLV (130 aa). Lys-993 bears the N6-acetyllysine mark. Catalysis depends on Asp-1032, which acts as the Proton donor; for dehydratase activity. Lys-1276 is subject to N6-acetyllysine. The residue at position 1464 (Cys-1464) is an S-nitrosocysteine. Phosphoserine is present on residues Ser-1578 and Ser-1588. The enoyl reductase stretch occupies residues 1629 to 1857; the sequence is DVPSSWTLEE…VQVREEEPEA (229 aa). An NADP(+)-binding site is contributed by 1665–1682; sequence VLIHSGSGGVGQAAISIA. At Lys-1698 the chain carries N6-(pyridoxal phosphate)lysine; alternate. Residue Lys-1698 is modified to N6-acetyllysine; alternate. An N6-acetyllysine mark is found at Lys-1765, Lys-1841, and Lys-1989. Residue 1765–1780 coordinates NADP(+); the sequence is KFDLSNNHPLGMAIFL. A beta-ketoacyl reductase region spans residues 1858-2113; sequence MLPGAQPTLI…VLAEKKAVAH (256 aa). Cys-2085 bears the S-nitrosocysteine mark. In terms of domain architecture, Carrier spans 2113–2193; it reads HGDGEAQRDL…EMSSKAGSDT (81 aa). An O-(pantetheine 4'-phosphoryl)serine; alternate modification is found at Ser-2151. Ser-2151 is subject to Phosphoserine; alternate. 2 positions are modified to phosphoserine: Ser-2191 and Ser-2230. The thioesterase stretch occupies residues 2202–2505; that stretch reads NDTSLKQAQL…AEPRVSVREG (304 aa). The active-site For thioesterase activity is the Ser-2302. Lys-2385 bears the N6-acetyllysine mark. Lys-2443 participates in a covalent cross-link: Glycyl lysine isopeptide (Lys-Gly) (interchain with G-Cter in SUMO2). Residue His-2475 is the For thioesterase activity of the active site.

Homodimer which is arranged in a head to tail fashion. Interacts with CEACAM1; this interaction is insulin and phosphorylation-dependent; reduces fatty-acid synthase activity. S-nitrosylation of Fatty acid synthase at cysteine residues Cys-1464 or Cys-2085 is important for the enzyme dimerization. In adipocytes, S-nitrosylation of Fatty acid synthase occurs under physiological conditions and gradually increases during adipogenesis.

Its subcellular location is the cytoplasm. The protein localises to the melanosome. The enzyme catalyses acetyl-CoA + n malonyl-CoA + 2n NADPH + 2n H(+) = a long-chain fatty acid + (n+1) CoA + n CO2 + 2n NADP(+).. It carries out the reaction holo-[ACP] + acetyl-CoA = acetyl-[ACP] + CoA. It catalyses the reaction holo-[ACP] + malonyl-CoA = malonyl-[ACP] + CoA. The catalysed reaction is a fatty acyl-[ACP] + malonyl-[ACP] + H(+) = a 3-oxoacyl-[ACP] + holo-[ACP] + CO2. The enzyme catalyses a (3R)-hydroxyacyl-[ACP] + NADP(+) = a 3-oxoacyl-[ACP] + NADPH + H(+). It carries out the reaction a (3R)-hydroxyacyl-[ACP] = a (2E)-enoyl-[ACP] + H2O. It catalyses the reaction a 2,3-saturated acyl-[ACP] + NADP(+) = a (2E)-enoyl-[ACP] + NADPH + H(+). The catalysed reaction is hexadecanoyl-[ACP] + H2O = hexadecanoate + holo-[ACP] + H(+). The enzyme catalyses acetyl-[ACP] + malonyl-[ACP] + H(+) = 3-oxobutanoyl-[ACP] + holo-[ACP] + CO2. It carries out the reaction 3-oxobutanoyl-[ACP] + NADPH + H(+) = (3R)-hydroxybutanoyl-[ACP] + NADP(+). It catalyses the reaction (3R)-hydroxybutanoyl-[ACP] = (2E)-butenoyl-[ACP] + H2O. The catalysed reaction is (2E)-butenoyl-[ACP] + NADPH + H(+) = butanoyl-[ACP] + NADP(+). The enzyme catalyses butanoyl-[ACP] + malonyl-[ACP] + H(+) = 3-oxohexanoyl-[ACP] + holo-[ACP] + CO2. It carries out the reaction 3-oxohexanoyl-[ACP] + NADPH + H(+) = (3R)-hydroxyhexanoyl-[ACP] + NADP(+). It catalyses the reaction (3R)-hydroxyhexanoyl-[ACP] = (2E)-hexenoyl-[ACP] + H2O. The catalysed reaction is (2E)-hexenoyl-[ACP] + NADPH + H(+) = hexanoyl-[ACP] + NADP(+). The enzyme catalyses hexanoyl-[ACP] + malonyl-[ACP] + H(+) = 3-oxooctanoyl-[ACP] + holo-[ACP] + CO2. It carries out the reaction 3-oxooctanoyl-[ACP] + NADPH + H(+) = (3R)-hydroxyoctanoyl-[ACP] + NADP(+). It catalyses the reaction (3R)-hydroxyoctanoyl-[ACP] = (2E)-octenoyl-[ACP] + H2O. The catalysed reaction is (2E)-octenoyl-[ACP] + NADPH + H(+) = octanoyl-[ACP] + NADP(+). The enzyme catalyses octanoyl-[ACP] + malonyl-[ACP] + H(+) = 3-oxodecanoyl-[ACP] + holo-[ACP] + CO2. It carries out the reaction 3-oxodecanoyl-[ACP] + NADPH + H(+) = (3R)-hydroxydecanoyl-[ACP] + NADP(+). It catalyses the reaction (3R)-hydroxydecanoyl-[ACP] = (2E)-decenoyl-[ACP] + H2O. The catalysed reaction is (2E)-decenoyl-[ACP] + NADPH + H(+) = decanoyl-[ACP] + NADP(+). The enzyme catalyses decanoyl-[ACP] + malonyl-[ACP] + H(+) = 3-oxododecanoyl-[ACP] + holo-[ACP] + CO2. It carries out the reaction 3-oxododecanoyl-[ACP] + NADPH + H(+) = (3R)-hydroxydodecanoyl-[ACP] + NADP(+). It catalyses the reaction (3R)-hydroxydodecanoyl-[ACP] = (2E)-dodecenoyl-[ACP] + H2O. The catalysed reaction is (2E)-dodecenoyl-[ACP] + NADPH + H(+) = dodecanoyl-[ACP] + NADP(+). The enzyme catalyses dodecanoyl-[ACP] + malonyl-[ACP] + H(+) = 3-oxotetradecanoyl-[ACP] + holo-[ACP] + CO2. It carries out the reaction 3-oxotetradecanoyl-[ACP] + NADPH + H(+) = (3R)-hydroxytetradecanoyl-[ACP] + NADP(+). It catalyses the reaction (3R)-hydroxytetradecanoyl-[ACP] = (2E)-tetradecenoyl-[ACP] + H2O. The catalysed reaction is (2E)-tetradecenoyl-[ACP] + NADPH + H(+) = tetradecanoyl-[ACP] + NADP(+). The enzyme catalyses tetradecanoyl-[ACP] + malonyl-[ACP] + H(+) = 3-oxohexadecanoyl-[ACP] + holo-[ACP] + CO2. It carries out the reaction 3-oxohexadecanoyl-[ACP] + NADPH + H(+) = (3R)-hydroxyhexadecanoyl-[ACP] + NADP(+). It catalyses the reaction (3R)-hydroxyhexadecanoyl-[ACP] = (2E)-hexadecenoyl-[ACP] + H2O. The catalysed reaction is (2E)-hexadecenoyl-[ACP] + NADPH + H(+) = hexadecanoyl-[ACP] + NADP(+). The enzyme catalyses hexadecanoyl-[ACP] + malonyl-[ACP] + H(+) = 3-oxooctadecanoyl-[ACP] + holo-[ACP] + CO2. It carries out the reaction 3-oxooctadecanoyl-[ACP] + NADPH + H(+) = (3R)-hydroxyoctadecanoyl-[ACP] + NADP(+). It catalyses the reaction (3R)-hydroxyoctadecanoyl-[ACP] = (2E)-octadecenoyl-[ACP] + H2O. The catalysed reaction is (2E)-octadecenoyl-[ACP] + NADPH + H(+) = octadecanoyl-[ACP] + NADP(+). The enzyme catalyses tetradecanoyl-[ACP] + H2O = tetradecanoate + holo-[ACP] + H(+). It carries out the reaction octadecanoyl-[ACP] + H2O = octadecanoate + holo-[ACP] + H(+). The protein operates within lipid metabolism; fatty acid biosynthesis. With respect to regulation, cerulenin, a potent non-competitive pharmacological inhibitor of FAS, binds covalently to the active site of the condensing enzyme region, inactivating a key enzyme step in fatty acid synthesis. Another inhibitor, though less efficient, is C75, a member of the alpha-methylene-gamma-butyrolactone chemical class, also proposed as an antitumour and anti-obesity agent. Its function is as follows. Fatty acid synthetase is a multifunctional enzyme that catalyzes the de novo biosynthesis of long-chain saturated fatty acids starting from acetyl-CoA and malonyl-CoA in the presence of NADPH. This multifunctional protein contains 7 catalytic activities and a site for the binding of the prosthetic group 4'-phosphopantetheine of the acyl carrier protein ([ACP]) domain. This is Fatty acid synthase (Fasn) from Rattus norvegicus (Rat).